The primary structure comprises 384 residues: Galactokinase (384 aa).

A substrate-binding site is contributed by 35-38 (EHTD). ATP-binding positions include Ser-69 and 125-131 (GAGLSSS). Mg(2+)-binding residues include Ser-131 and Glu-163. The Proton acceptor role is filled by Asp-175. Tyr-224 is a substrate binding site.

Belongs to the GHMP kinase family. GalK subfamily.

The protein resides in the cytoplasm. The catalysed reaction is alpha-D-galactose + ATP = alpha-D-galactose 1-phosphate + ADP + H(+). The protein operates within carbohydrate metabolism; galactose metabolism. In terms of biological role, catalyzes the transfer of the gamma-phosphate of ATP to D-galactose to form alpha-D-galactose-1-phosphate (Gal-1-P). The polypeptide is Galactokinase (Aliivibrio fischeri (strain ATCC 700601 / ES114) (Vibrio fischeri)).